A 182-amino-acid chain; its full sequence is Triplatin (182 aa).

A signal peptide spans M1 to A18. Disulfide bonds link C21/C133, C55/C177, and C88/C105.

This sequence belongs to the calycin superfamily. Triabin family. In terms of tissue distribution, expressed in salivary glands.

The protein localises to the secreted. Its function is as follows. Inhibits platelet aggregation and vasoconstriction through binding to distinct eicosanoids involved in inflammation (acts as a scavenger), and has a role in inhibiting host innate immunity by impairing platelet-assisted formation of neutrophil extracellular traps (NETs). Inhibits platelet aggregation by collagen, and low doses of thromboxane A2 mimetic (TXA2 mimetic), and arachidonic acid (AA) without affecting aggregation induced by ADP, convulxin (GP6 agonist), and PMA. Binds to TXA2, TXB2, prostaglandine H2 mimetic (PGH2 mimetic), PGJ2, and PGF2alpha. Binding is not observed to leukotrienes, AA, and biogenic amines (PGE1, 5(S)-HETE, 12(S)-HETE, 20-HETE, norepinephrine, epinephrine, serotonin, LTC4 and ADP). Induces relaxation of aorta rat previously contracted with TXA2 mimetic. Moreover, it also impairs platelet-assisted formation of neutrophil extracellular traps (NETs). NETs are web-like structures of DNA and proteins that play an important role in killing of pathogens. In addition, NETs are implicated in thrombus formation. In vivo, this protein exhibits antithrombotic activity in two distinct mice models that are highly dependent on platelets. It is noteworthy that it inhibits thrombosis without promoting excessive bleeding. The protein is Triplatin of Triatoma infestans (Assassin bug).